The following is a 651-amino-acid chain: Chaperone protein HtpG (651 aa).

The interval 1–353 (MAAHVEQLEF…AQDMSLNVSR (353 aa)) is a; substrate-binding. A b region spans residues 354 to 569 (EILQQDRQIR…TFGITPALAR (216 aa)). The interval 570 to 651 (MYRASGQPVP…RLTRTVGDQT (82 aa)) is c.

It belongs to the heat shock protein 90 family. In terms of assembly, homodimer.

It localises to the cytoplasm. Molecular chaperone. Has ATPase activity. The sequence is that of Chaperone protein HtpG from Mycolicibacterium vanbaalenii (strain DSM 7251 / JCM 13017 / BCRC 16820 / KCTC 9966 / NRRL B-24157 / PYR-1) (Mycobacterium vanbaalenii).